We begin with the raw amino-acid sequence, 640 residues long: Threonine--tRNA ligase (640 aa).

One can recognise a TGS domain in the interval 1 to 59 (MKIKVKLPDGKEKEYDRGITPAEIAKELGVKKAIGAVVNGELWDLKRPIENDCELRLVT). The interval 240–531 (DHRKLGPHLE…LIEHFAGAFP (292 aa)) is catalytic. Zn(2+) contacts are provided by cysteine 332, histidine 383, and histidine 508.

This sequence belongs to the class-II aminoacyl-tRNA synthetase family. In terms of assembly, homodimer. Zn(2+) is required as a cofactor.

It localises to the cytoplasm. It carries out the reaction tRNA(Thr) + L-threonine + ATP = L-threonyl-tRNA(Thr) + AMP + diphosphate + H(+). Its function is as follows. Catalyzes the attachment of threonine to tRNA(Thr) in a two-step reaction: L-threonine is first activated by ATP to form Thr-AMP and then transferred to the acceptor end of tRNA(Thr). Also edits incorrectly charged L-seryl-tRNA(Thr). In Thermotoga sp. (strain RQ2), this protein is Threonine--tRNA ligase.